We begin with the raw amino-acid sequence, 301 residues long: uncharacterized protein (301 aa).

Active-site charge relay system residues include Ser44 and Tyr107. Tyr133 acts as the Proton donor in catalysis. Lys162 acts as the Schiff-base intermediate with substrate in catalysis.

Belongs to the DapA family. Homotetramer.

It localises to the cytoplasm. This is an uncharacterized protein from Pyrobaculum arsenaticum (strain DSM 13514 / JCM 11321 / PZ6).